The chain runs to 325 residues: Fatty acid synthase alpha subunit hexA (325 aa).

Position 209 (D209) interacts with Mg(2+). Residues 209 to 211 (DLV), 255 to 265 (EAVFKCLHTQT), 279 to 282 (KSDN), and 301 to 303 (ISH) each bind acetyl-CoA. S302 lines the Mg(2+) pocket.

It belongs to the thiolase-like superfamily. Fungal fatty acid synthetase subunit alpha family. As to quaternary structure, [Alpha(6)beta(6)] hexamers of two multifunctional subunits (alpha and beta). 4'-phosphopantetheine is transferred from CoA to a specific serine of the acyl carrier domain by the C-terminal PPT domain. This modification is essential for activity because fatty acids are bound in thioester linkage to the sulfhydryl of the prosthetic group.

It catalyses the reaction acetyl-CoA + n malonyl-CoA + 2n NADPH + 4n H(+) = a long-chain-acyl-CoA + n CoA + n CO2 + 2n NADP(+).. It carries out the reaction a fatty acyl-[ACP] + malonyl-[ACP] + H(+) = a 3-oxoacyl-[ACP] + holo-[ACP] + CO2. The catalysed reaction is a (3R)-hydroxyacyl-[ACP] + NADP(+) = a 3-oxoacyl-[ACP] + NADPH + H(+). It functions in the pathway mycotoxin biosynthesis. Fatty acid synthase alpha subunit; part of the fragmented gene cluster that mediates the biosynthesis of dothistromin (DOTH), a polyketide toxin very similar in structure to the aflatoxin precursor, versicolorin B. The first step of the pathway is the conversion of acetate to norsolorinic acid (NOR) and requires the fatty acid synthase subunits hexA and hexB, as well as the polyketide synthase pksA. PksA combines a hexanoyl starter unit and 7 malonyl-CoA extender units to synthesize the precursor NOR. The hexanoyl starter unit is provided to the acyl-carrier protein (ACP) domain by the fungal fatty acid synthase hexA/hexB. The second step is the conversion of NOR to averantin (AVN) and requires the norsolorinic acid ketoreductase nor1, which catalyzes the dehydration of norsolorinic acid to form (1'S)-averantin. The cytochrome P450 monooxygenase avnA then catalyzes the hydroxylation of AVN to 5'hydroxyaverantin (HAVN). The next step is performed by adhA that transforms HAVN to averufin (AVF). Averufin might then be converted to hydroxyversicolorone by cypX and avfA. Hydroxyversicolorone is further converted versiconal hemiacetal acetate (VHA) by moxY. VHA is then the substrate for the versiconal hemiacetal acetate esterase est1 to yield versiconal (VAL). Versicolorin B synthase vbsA then converts VAL to versicolorin B (VERB) by closing the bisfuran ring. Then, the activity of the versicolorin B desaturase verB leads to versicolorin A (VERA). DotB, a predicted chloroperoxidase, may perform epoxidation of the A-ring of VERA. Alternatively, a cytochrome P450, such as cypX or avnA could catalyze this step. It is also possible that another, uncharacterized, cytochrome P450 enzyme is responsible for this step. Opening of the epoxide could potentially be achieved by the epoxide hydrolase epoA. However, epoA seems not to be required for DOTH biosynthesis, but other epoxide hydrolases may have the ability to complement this hydrolysis. Alternatively, opening of the epoxide ring could be achieved non-enzymatically. The next step is the deoxygenation of ring A to yield the 5,8-dihydroxyanthraquinone which is most likely catalyzed by the NADPH dehydrogenase encoded by ver1. The last stages of DOTH biosynthesis are proposed to involve hydroxylation of the bisfuran. OrdB and norB might have oxidative roles here. An alternative possibility is that cytochrome P450 monoogenases such as avnA and cypX might perform these steps in addition to previously proposed steps. The protein is Fatty acid synthase alpha subunit hexA of Dothistroma septosporum (Red band needle blight fungus).